The primary structure comprises 130 residues: Small ribosomal subunit protein uS9 (130 aa).

The protein belongs to the universal ribosomal protein uS9 family.

The protein is Small ribosomal subunit protein uS9 of Desulfosudis oleivorans (strain DSM 6200 / JCM 39069 / Hxd3) (Desulfococcus oleovorans).